A 289-amino-acid polypeptide reads, in one-letter code: Orotidine 5'-phosphate decarboxylase (289 aa).

Lysine 97 serves as the catalytic Proton donor.

Belongs to the OMP decarboxylase family. Type 2 subfamily.

It carries out the reaction orotidine 5'-phosphate + H(+) = UMP + CO2. It participates in pyrimidine metabolism; UMP biosynthesis via de novo pathway; UMP from orotate: step 2/2. This chain is Orotidine 5'-phosphate decarboxylase, found in Petrotoga mobilis (strain DSM 10674 / SJ95).